The chain runs to 609 residues: CTTNBP2 N-terminal-like protein (609 aa).

Residues 1 to 10 (MEQNSNSSVA) are compositionally biased toward polar residues. The segment at 1 to 29 (MEQNSNSSVADTFAEAPATDADYGTENCS) is disordered. 2 coiled-coil regions span residues 182-264 (RMVN…QKQI) and 303-370 (IAEG…QQLG). A disordered region spans residues 556–584 (PPAGARGAPPPIPTKPIVPPKREPSLSRL). Positions 563–574 (APPPIPTKPIVP) are enriched in pro residues. The residue at position 586 (S586) is a Phosphoserine.

It localises to the cell projection. Its subcellular location is the lamellipodium. It is found in the cytoplasm. The protein localises to the cytoskeleton. The protein resides in the stress fiber. Functionally, regulates lamellipodial actin dynamics in a Cortactin-dependent manner and is therefore likely involved in controlling actin branch density, actin-retrograde flow rates and lamellipodial protrusion. Functions by slowing the dissociation of Cortactin from Arp2/3 nucleated branches thereby increasing branch nucleation and junction stability. Associates with core striatin-interacting phosphatase and kinase (STRIPAK) complex to form CTTNBP2NL-STRIPAK complexes. STRIPAK complexes have critical roles in protein (de)phosphorylation and are regulators of multiple signaling pathways including Hippo, MAPK, nuclear receptor and cytoskeleton remodeling. Different types of STRIPAK complexes are involved in a variety of biological processes such as cell growth, differentiation, apoptosis, metabolism and immune regulation. This is CTTNBP2 N-terminal-like protein from Drosophila melanogaster (Fruit fly).